Consider the following 310-residue polypeptide: Zinc transporter ZIP9 (310 aa).

Transmembrane regions (helical) follow at residues Ile7 to Ala27, Leu35 to Ile55, Ala108 to Gly128, Ile148 to Ala168, Leu178 to Phe198, His212 to Ser232, Gly246 to Pro266, and Val289 to His309.

The protein belongs to the ZIP transporter (TC 2.A.5) family. As to expression, expressed in brain, liver, ovary, and testis.

Its subcellular location is the golgi apparatus. It is found in the trans-Golgi network membrane. It localises to the cell membrane. The protein resides in the cytoplasm. The protein localises to the perinuclear region. Its subcellular location is the mitochondrion. It is found in the nucleus. It catalyses the reaction Zn(2+)(in) = Zn(2+)(out). In terms of biological role, has dual functions as a membrane-bound androgen receptor and as an androgen-dependent zinc transporter both of which are mediated through G protein activation and are required for the androgen-dependent apoptotic response. Upon androgen binding, mediates apoptosis by directly activating a stimulatory G protein that leads to increased cAMP levels and MAP kinase activity and which is accompanied by increased intracellular free zinc levels. The protein is Zinc transporter ZIP9 of Micropogonias undulatus (Atlantic croaker).